The following is a 211-amino-acid chain: MRILTVSPDQYERYRSFLKQMHRLRATVFGGRLEWDVSIIAGEERDQYDNFKPSYLLAITDSGRVAGCVRLLPACGPTMLEQTFSQLLEMGSLAAHSGMVESSRFCVDTSLVSRRDASQLHLATLTLFAGIIEWSMASGYTEIVTATDLRFERILKRAGWPMRRLGEPTAIGNTIAIAGRLPADRASFEQVCPPGYYSIPRIDVAAIRSAA.

The protein belongs to the autoinducer synthase family.

It carries out the reaction a fatty acyl-[ACP] + S-adenosyl-L-methionine = an N-acyl-L-homoserine lactone + S-methyl-5'-thioadenosine + holo-[ACP] + H(+). Functionally, required for the synthesis of OHHL (N-(3-oxohexanoyl)-L-homoserine lactone), an autoinducer molecule which binds to TraR and thus acts in the control of conjugal transfer. The sequence is that of Acyl-homoserine-lactone synthase (traI) from Agrobacterium fabrum (strain C58 / ATCC 33970) (Agrobacterium tumefaciens (strain C58)).